Consider the following 77-residue polypeptide: U11-lycotoxin-Ls1d (77 aa).

Positions 1 to 20 are cleaved as a signal peptide; sequence MKLIIFTGLVLFAIVSLIEA. Residues 21–26 constitute a propeptide that is removed on maturation; sequence EEESGR.

Belongs to the neurotoxin 19 (CSTX) family. 10 (U11-Lctx) subfamily. Contains 4 disulfide bonds. In terms of tissue distribution, expressed by the venom gland.

Its subcellular location is the secreted. This Lycosa singoriensis (Wolf spider) protein is U11-lycotoxin-Ls1d.